Consider the following 210-residue polypeptide: MATETVELHKLKLAELKQECLARGLETKGIKQDLIHRLQAYLEEHAEEEANEEDVLGDETEEEETKPIELPVKEEEPPEKTVDVAAEKKVVKITSEIPQTERMQKRAERFNVPVSLESKKAARAARFGISSVPTKGLSSDNKPMVNLDKLKERAQRFGLNVSSISRKSEDDEKLKKRKERFGIVTSSAGTGTTEDTEAKKRKRAERFGIA.

Alanine 2 is subject to N-acetylalanine. The 35-residue stretch at 8–42 folds into the SAP domain; it reads LHKLKLAELKQECLARGLETKGIKQDLIHRLQAYL. Position 10 is an N6-acetyllysine (lysine 10). Residues 45–64 are compositionally biased toward acidic residues; it reads HAEEEANEEDVLGDETEEEE. A disordered region spans residues 45–86; the sequence is HAEEEANEEDVLGDETEEEETKPIELPVKEEEPPEKTVDVAA. Residues 65-86 show a composition bias toward basic and acidic residues; that stretch reads TKPIELPVKEEEPPEKTVDVAA. Lysine 142 is modified (N6-acetyllysine). Positions 161 to 210 are disordered; sequence VSSISRKSEDDEKLKKRKERFGIVTSSAGTGTTEDTEAKKRKRAERFGIA. Residue serine 163 is modified to Phosphoserine. The span at 184-193 shows a compositional bias: polar residues; it reads VTSSAGTGTT.

It belongs to the SAP domain-containing ribonucleoprotein family. As to quaternary structure, interacts with DDX39A. Interacts with FUS. Interacts (via the C-terminal domain) with DDX39B; the interaction is direct and facilitates RNA binding of DDX39B. Component of the transcription/export (TREX) complex at least composed of ALYREF/THOC4, DDX39B, SARNP/CIP29, CHTOP and the THO subcomplex; TREX seems to have dynamic structure involving ATP-dependent remodeling; in the complex interacts directly with DDX39B in a ATP-dependent manner which bridges it to ALYREF/THOC4. In terms of tissue distribution, low expression in spleen, liver, pancreas, testis, thymus, heart, and kidney. Increased levels are seen in hepatocellular carcinoma and pancreatic adenocarcinoma.

The protein resides in the nucleus. It localises to the nucleus speckle. In terms of biological role, binds both single-stranded and double-stranded DNA with higher affinity for the single-stranded form. Specifically binds to scaffold/matrix attachment region DNA. Also binds single-stranded RNA. Enhances RNA unwinding activity of DDX39A. May participate in important transcriptional or translational control of cell growth, metabolism and carcinogenesis. Component of the TREX complex which is thought to couple mRNA transcription, processing and nuclear export, and specifically associates with spliced mRNA and not with unspliced pre-mRNA. The TREX complex is recruited to spliced mRNAs by a transcription-independent mechanism, binds to mRNA upstream of the exon-junction complex (EJC) and is recruited in a splicing- and cap-dependent manner to a region near the 5' end of the mRNA where it functions in mRNA export to the cytoplasm via the TAP/NXF1 pathway. Associates with DDX39B, which facilitates RNA binding of DDX39B and likely plays a role in mRNA export. The protein is SAP domain-containing ribonucleoprotein (SARNP) of Homo sapiens (Human).